The chain runs to 279 residues: Putative pyruvate, phosphate dikinase regulatory protein (279 aa).

Position 153 to 160 (G153 to T160) interacts with ADP.

The protein belongs to the pyruvate, phosphate/water dikinase regulatory protein family. PDRP subfamily.

It carries out the reaction N(tele)-phospho-L-histidyl/L-threonyl-[pyruvate, phosphate dikinase] + ADP = N(tele)-phospho-L-histidyl/O-phospho-L-threonyl-[pyruvate, phosphate dikinase] + AMP + H(+). The enzyme catalyses N(tele)-phospho-L-histidyl/O-phospho-L-threonyl-[pyruvate, phosphate dikinase] + phosphate + H(+) = N(tele)-phospho-L-histidyl/L-threonyl-[pyruvate, phosphate dikinase] + diphosphate. Functionally, bifunctional serine/threonine kinase and phosphorylase involved in the regulation of the pyruvate, phosphate dikinase (PPDK) by catalyzing its phosphorylation/dephosphorylation. The polypeptide is Putative pyruvate, phosphate dikinase regulatory protein (Rhodopseudomonas palustris (strain BisB5)).